Here is a 279-residue protein sequence, read N- to C-terminus: Hydroxyethylthiazole kinase (279 aa).

Met-58 lines the substrate pocket. Positions 134 and 180 each coordinate ATP. Position 207 (Gly-207) interacts with substrate.

The protein belongs to the Thz kinase family. The cofactor is Mg(2+).

The catalysed reaction is 5-(2-hydroxyethyl)-4-methylthiazole + ATP = 4-methyl-5-(2-phosphooxyethyl)-thiazole + ADP + H(+). It functions in the pathway cofactor biosynthesis; thiamine diphosphate biosynthesis; 4-methyl-5-(2-phosphoethyl)-thiazole from 5-(2-hydroxyethyl)-4-methylthiazole: step 1/1. In terms of biological role, catalyzes the phosphorylation of the hydroxyl group of 4-methyl-5-beta-hydroxyethylthiazole (THZ). The protein is Hydroxyethylthiazole kinase of Methanoculleus marisnigri (strain ATCC 35101 / DSM 1498 / JR1).